Consider the following 209-residue polypeptide: Ribosomal RNA large subunit methyltransferase E (209 aa).

The S-adenosyl-L-methionine site is built by glycine 63, tryptophan 65, aspartate 83, aspartate 99, and aspartate 124. The active-site Proton acceptor is the lysine 164.

It belongs to the class I-like SAM-binding methyltransferase superfamily. RNA methyltransferase RlmE family.

The protein localises to the cytoplasm. It catalyses the reaction uridine(2552) in 23S rRNA + S-adenosyl-L-methionine = 2'-O-methyluridine(2552) in 23S rRNA + S-adenosyl-L-homocysteine + H(+). Specifically methylates the uridine in position 2552 of 23S rRNA at the 2'-O position of the ribose in the fully assembled 50S ribosomal subunit. The sequence is that of Ribosomal RNA large subunit methyltransferase E from Vibrio vulnificus (strain CMCP6).